A 175-amino-acid polypeptide reads, in one-letter code: UPF0398 protein SSA_1858 (175 aa).

The protein belongs to the UPF0398 family.

The sequence is that of UPF0398 protein SSA_1858 from Streptococcus sanguinis (strain SK36).